The sequence spans 529 residues: Low affinity inorganic phosphate transporter 5 (529 aa).

Over 1 to 21 (MASNNLNVLNALDTAHTQWYH) the chain is Cytoplasmic. A helical transmembrane segment spans residues 22–42 (VTAVVIAGMGFFTDAYDLFCI). Over 43 to 71 (STISKLLGRLYYYDPHTHAPGKLPHTVNN) the chain is Extracellular. Residues 72 to 92 (WVTGVALVGTLTGQLVFGWLG) form a helical membrane-spanning segment. Topologically, residues 93–99 (DKLGRKK) are cytoplasmic. Residues 100–120 (VYGLTLILMVICALSSGLSFG) traverse the membrane as a helical segment. Over 121-124 (YSRK) the chain is Extracellular. A helical membrane pass occupies residues 125-145 (VVIGTLCFFRFWLGFGIGGDY). Topologically, residues 146–163 (PLSATIMSEYANKRTRGA) are cytoplasmic. The chain crosses the membrane as a helical span at residues 164–184 (FIAAVFAMQGVGIIFAGLVLM). Topologically, residues 185-211 (TVSKVFLMRYAGKAFSTDEVFSTEPEA) are extracellular. Residues 212-232 (DYVWRIVLMLGALPALLTYYW) form a helical membrane-spanning segment. The Cytoplasmic portion of the chain corresponds to 233–291 (RMKMPETGRYTAIIEGNAKQAAIDMGKVLEIEIQAEGEKLAKFKSANDYSLLSNEFFQR). A helical transmembrane segment spans residues 292 to 312 (HGLHLIGTMSTWFLLDIAFYS). Topologically, residues 313–344 (QNLTQKDIFPTMGLVSDAKSISALREMFETSR) are extracellular. Asparagine 314 carries N-linked (GlcNAc...) asparagine glycosylation. Residues 345–365 (AMFVIALLGTFPGYWFTVFFI) form a helical membrane-spanning segment. Residues 366–374 (EKIGRFKIQ) lie on the Cytoplasmic side of the membrane. The chain crosses the membrane as a helical span at residues 375–395 (LMGFFMMSIFMAIIGVRYDYL). Residues 396–405 (KTKDHKWTFA) are Extracellular-facing. A helical transmembrane segment spans residues 406-426 (ALYGLTFFFANSGPNSTTFVL). Over 427–472 (PAELFPTRVRSTCHALSAASGKAGAMVSAFGVQQYTQDGEVHKIKK) the chain is Cytoplasmic. A helical transmembrane segment spans residues 473 to 493 (AMLFLAFTNMVGFCCTFLVTE). Topologically, residues 494-529 (TKGRSLEEISGEDENQNETKMKGRPVSGGHQDDGWD) are extracellular. A disordered region spans residues 500–529 (EEISGEDENQNETKMKGRPVSGGHQDDGWD). Asparagine 510 is a glycosylation site (N-linked (GlcNAc...) asparagine).

This sequence belongs to the major facilitator superfamily. Phosphate:H(+) symporter (TC 2.A.1.9) family. In terms of tissue distribution, expressed at low levels in non-mycorrhized roots.

The protein resides in the cell membrane. It carries out the reaction phosphate(in) + H(+)(in) = phosphate(out) + H(+)(out). Low-affinity transporter for external inorganic phosphate (Pi) probably involved in the acquisition of phosphate released by arbuscular mycorrhizal (AM) fungi during AM symbiosis. This is Low affinity inorganic phosphate transporter 5 from Petunia hybrida (Petunia).